The following is a 292-amino-acid chain: NADH-cytochrome b5 reductase 1 (292 aa).

The chain crosses the membrane as a helical span at residues alanine 12 to glycine 32. One can recognise an FAD-binding FR-type domain in the interval threonine 43–threonine 148. FAD is bound by residues threonine 128 to glycine 143 and histidine 154 to leucine 191.

The protein belongs to the flavoprotein pyridine nucleotide cytochrome reductase family. In terms of assembly, monomer. Component of the 2-(3-amino-3-carboxypropyl)histidine synthase complex composed of dph1, dph2, dph3 and a NADH-dependent reductase, predominantly cbr1. FAD serves as cofactor.

The protein localises to the mitochondrion outer membrane. It carries out the reaction 2 Fe(III)-[cytochrome b5] + NADH = 2 Fe(II)-[cytochrome b5] + NAD(+) + H(+). The catalysed reaction is 2 Fe(3+)-[Dph3] + NADH = 2 Fe(2+)-[Dph3] + NAD(+) + H(+). The protein operates within protein modification; peptidyl-diphthamide biosynthesis. Functionally, NADH-dependent reductase for dph3 and cytochrome b5. Required for the first step of diphthamide biosynthesis, a post-translational modification of histidine which occurs in elongation factor 2. Dph1 and dph2 transfer a 3-amino-3-carboxypropyl (ACP) group from S-adenosyl-L-methionine (SAM) to a histidine residue, the reaction is assisted by a reduction system comprising dph3 and a NADH-dependent reductase, predominantly cbr1. By reducing dph3, also involved in the formation of the tRNA wobble base modification mcm5s 2U (5-methoxycarbonylmethyl-2-thiouridine), mediated by the elongator complex. The cytochrome b5/NADH cytochrome b5 reductase electron transfer system supports the catalytic activity of several sterol biosynthetic enzymes. This chain is NADH-cytochrome b5 reductase 1 (cbr1), found in Aspergillus oryzae (strain ATCC 42149 / RIB 40) (Yellow koji mold).